The chain runs to 218 residues: Trimethylamine corrinoid protein 2 (218 aa).

Positions 1 to 92 constitute a B12-binding N-terminal domain; it reads MAGKEEIIAK…EMEKRKSQTK (92 aa). Residues 94-218 form the B12-binding domain; that stretch reads LGTVIIGTIE…AKVKAALKVG (125 aa). A methylcob(III)alamin-binding site is contributed by histidine 107.

The protein belongs to the methylamine corrinoid protein family. Can form a complex with MttB.

Its pathway is one-carbon metabolism; methanogenesis from trimethylamine. Functionally, acts probably as a methyl group carrier between MttB and either MtbA or MtaA. This chain is Trimethylamine corrinoid protein 2 (mttC2), found in Methanosarcina mazei (strain ATCC BAA-159 / DSM 3647 / Goe1 / Go1 / JCM 11833 / OCM 88) (Methanosarcina frisia).